A 552-amino-acid polypeptide reads, in one-letter code: Small ribosomal subunit protein bS1 (552 aa).

S1 motif domains are found at residues 31–101, 116–179, 200–268, 285–355, 372–440, and 457–521; these read TIKE…ISQQ, NAII…ISRK, TEPV…LSIK, GYAI…VSLK, GDIV…LSAK, and DSVI…ASVH.

The protein belongs to the bacterial ribosomal protein bS1 family.

Its function is as follows. Binds mRNA; thus facilitating recognition of the initiation point. It is needed to translate mRNA with a short Shine-Dalgarno (SD) purine-rich sequence. The polypeptide is Small ribosomal subunit protein bS1 (rpsA) (Helicobacter pylori (strain J99 / ATCC 700824) (Campylobacter pylori J99)).